The following is a 317-amino-acid chain: DNA-directed RNA polymerase subunit alpha (317 aa).

Residues 1–234 (MKQFVRPEFI…AHLEFFIDLN (234 aa)) are alpha N-terminal domain (alpha-NTD). The tract at residues 250–317 (DKELDRTVEE…ASLGLAFRQS (68 aa)) is alpha C-terminal domain (alpha-CTD).

Belongs to the RNA polymerase alpha chain family. Homodimer. The RNAP catalytic core consists of 2 alpha, 1 beta, 1 beta' and 1 omega subunit. When a sigma factor is associated with the core the holoenzyme is formed, which can initiate transcription.

It catalyses the reaction RNA(n) + a ribonucleoside 5'-triphosphate = RNA(n+1) + diphosphate. Functionally, DNA-dependent RNA polymerase catalyzes the transcription of DNA into RNA using the four ribonucleoside triphosphates as substrates. The protein is DNA-directed RNA polymerase subunit alpha of Mycoplasma mycoides subsp. mycoides SC (strain CCUG 32753 / NCTC 10114 / PG1).